We begin with the raw amino-acid sequence, 316 residues long: Pantothenate kinase (316 aa).

95–102 (GSVAVGKS) provides a ligand contact to ATP.

This sequence belongs to the prokaryotic pantothenate kinase family.

It is found in the cytoplasm. The enzyme catalyses (R)-pantothenate + ATP = (R)-4'-phosphopantothenate + ADP + H(+). It participates in cofactor biosynthesis; coenzyme A biosynthesis; CoA from (R)-pantothenate: step 1/5. This chain is Pantothenate kinase, found in Shewanella sp. (strain MR-4).